The primary structure comprises 212 residues: Protein G1-like7 (212 aa).

The span at methionine 1 to alanine 22 shows a compositional bias: low complexity. 2 disordered regions span residues methionine 1–serine 34 and lysine 148–serine 212. The 128-residue stretch at arginine 31–lysine 158 folds into the ALOG domain. Positions lysine 156–lysine 160 match the Nuclear localization signal motif. Residues serine 173–alanine 182 are compositionally biased toward low complexity. Residues alanine 183–alanine 194 show a composition bias toward gly residues.

Belongs to the plant homeotic and developmental regulators ALOG protein family.

The protein localises to the nucleus. Its function is as follows. Probable transcription regulator that acts as a developmental regulator by promoting cell growth in response to light. This chain is Protein G1-like7, found in Oryza sativa subsp. indica (Rice).